Consider the following 416-residue polypeptide: Probable histone-binding protein lin-53 (416 aa).

6 WD repeats span residues 118-158 (NHEG…SVPK), 170-210 (GHTK…GANG), 220-260 (GHES…PGHA), 263-303 (AHSA…LKLH), 307-347 (SHRD…EDQT), and 364-404 (GHTA…YNDV).

The protein belongs to the WD repeat RBAP46/RBAP48/MSI1 family. As to quaternary structure, binds directly to helix 1 of the histone fold of histone H4, a region that is not accessible when H4 is in chromatin. Probable component of a NuRD-like complex, composed of at least lin-53 and hda-1. Interacts with lin-35. Interacts with hda-1; the interaction is direct. Component of the DRM complex, at least composed of lin-9, lin-35, lin-37, lin-52, lin-53, lin-54- dpl-1 and efl-1. Interacts with hcp-3.

It localises to the nucleus. It is found in the chromosome. The protein localises to the centromere. In terms of biological role, core histone-binding subunit that may target chromatin assembly factors, chromatin remodeling factors and histone deacetylases to their histone substrates in a manner that is regulated by nucleosomal DNA. Required for hcp-3 and his-1 stabilization, localization of hcp-3 to centromeres and for proper chromosome segregation. Synthetic multivulva class B (synMuvB) protein. SynMuvB proteins are required to repress the induction of vulval development by Ras signaling and probably act by forming the multiprotein DRM complex that represses transcription. The sequence is that of Probable histone-binding protein lin-53 from Caenorhabditis briggsae.